Here is a 404-residue protein sequence, read N- to C-terminus: Phosphopentomutase (404 aa).

6 residues coordinate Mn(2+): Asp10, Asp303, His308, Asp344, His345, and His356.

This sequence belongs to the phosphopentomutase family. It depends on Mn(2+) as a cofactor.

Its subcellular location is the cytoplasm. It catalyses the reaction 2-deoxy-alpha-D-ribose 1-phosphate = 2-deoxy-D-ribose 5-phosphate. The enzyme catalyses alpha-D-ribose 1-phosphate = D-ribose 5-phosphate. It functions in the pathway carbohydrate degradation; 2-deoxy-D-ribose 1-phosphate degradation; D-glyceraldehyde 3-phosphate and acetaldehyde from 2-deoxy-alpha-D-ribose 1-phosphate: step 1/2. Isomerase that catalyzes the conversion of deoxy-ribose 1-phosphate (dRib-1-P) and ribose 1-phosphate (Rib-1-P) to deoxy-ribose 5-phosphate (dRib-5-P) and ribose 5-phosphate (Rib-5-P), respectively. The sequence is that of Phosphopentomutase from Shewanella baltica (strain OS223).